We begin with the raw amino-acid sequence, 488 residues long: Tocopherol cyclase, chloroplastic (488 aa).

The transit peptide at 1 to 76 (MEIRSLIVSM…VPTSPNRELR (76 aa)) directs the protein to the chloroplast.

It localises to the plastid. The protein resides in the chloroplast. Its subcellular location is the plastoglobule. It catalyses the reaction delta-tocopherol = 2-methyl-6-phytyl-1,4-benzene-1,4-diol. It carries out the reaction gamma-tocopherol = 2,3-dimethyl-6-phytylbenzene-1,4-diol. The enzyme catalyses delta-tocotrienol = 6-geranylgeranyl-2-methylbenzene-1,4-diol. The catalysed reaction is gamma-tocotrienol = 6-geranylgeranyl-2,3-dimethylbenzene-1,4-diol. The protein operates within cofactor biosynthesis; tocopherol biosynthesis. Functionally, involved in the synthesis of both tocopherols and tocotrienols (vitamin E), which presumably protect photosynthetic complexes from oxidative stress. Catalyzes the conversion of 2-methyl-6-phytyl-1,4-hydroquinone and 2,3-dimethyl-5-phytyl-1,4-hydroquinone (DMPQ) to delta- and gamma-tocopherol respectively. Also converts 2,3-dimethyl-5-geranylgeranyl-1,4-hydroquinone (DMGQ) to gamma-tocotrienol. The polypeptide is Tocopherol cyclase, chloroplastic (VTE1) (Arabidopsis thaliana (Mouse-ear cress)).